Consider the following 529-residue polypeptide: Peptide chain release factor 3 (529 aa).

The tr-type G domain maps to 11–280; sequence AKRRTFAIIS…GLVEWAPAPM (270 aa). Residues 20-27, 88-92, and 142-145 contribute to the GTP site; these read SHPDAGKT, DTPGH, and NKLD.

The protein belongs to the TRAFAC class translation factor GTPase superfamily. Classic translation factor GTPase family. PrfC subfamily.

The protein resides in the cytoplasm. Functionally, increases the formation of ribosomal termination complexes and stimulates activities of RF-1 and RF-2. It binds guanine nucleotides and has strong preference for UGA stop codons. It may interact directly with the ribosome. The stimulation of RF-1 and RF-2 is significantly reduced by GTP and GDP, but not by GMP. In Salmonella arizonae (strain ATCC BAA-731 / CDC346-86 / RSK2980), this protein is Peptide chain release factor 3.